Consider the following 213-residue polypeptide: Imidazole glycerol phosphate synthase subunit HisH (213 aa).

The region spanning 4–213 (SIAIVDYGMG…LYRNFVHWNP (210 aa)) is the Glutamine amidotransferase type-1 domain. Cys-83 (nucleophile) is an active-site residue. Catalysis depends on residues His-193 and Glu-195.

Heterodimer of HisH and HisF.

It is found in the cytoplasm. The catalysed reaction is 5-[(5-phospho-1-deoxy-D-ribulos-1-ylimino)methylamino]-1-(5-phospho-beta-D-ribosyl)imidazole-4-carboxamide + L-glutamine = D-erythro-1-(imidazol-4-yl)glycerol 3-phosphate + 5-amino-1-(5-phospho-beta-D-ribosyl)imidazole-4-carboxamide + L-glutamate + H(+). It catalyses the reaction L-glutamine + H2O = L-glutamate + NH4(+). The protein operates within amino-acid biosynthesis; L-histidine biosynthesis; L-histidine from 5-phospho-alpha-D-ribose 1-diphosphate: step 5/9. In terms of biological role, IGPS catalyzes the conversion of PRFAR and glutamine to IGP, AICAR and glutamate. The HisH subunit catalyzes the hydrolysis of glutamine to glutamate and ammonia as part of the synthesis of IGP and AICAR. The resulting ammonia molecule is channeled to the active site of HisF. This is Imidazole glycerol phosphate synthase subunit HisH from Burkholderia pseudomallei (strain K96243).